Here is a 937-residue protein sequence, read N- to C-terminus: Chaperone protein ClpD2, chloroplastic (937 aa).

The transit peptide at 1–80 directs the protein to the chloroplast; that stretch reads MEACCCSSSS…FERFTERAVK (80 aa). Repeat regions lie at residues 81 to 137 and 152 to 217; these read AVVF…VGKE and FSGA…VQGE. The region spanning 81 to 217 is the Clp R domain; the sequence is AVVFSQREAR…KQALTRVQGE (137 aa). The segment at 259 to 513 is i; the sequence is LALFCLDLTM…RMESFKRKKE (255 aa). ATP is bound by residues 304-311 and 658-665; these read GEAGVGKT and GPTGVGKT. The segment at 584–775 is II; it reads VGSEEIARVT…LIVMTSNVGS (192 aa).

It belongs to the ClpA/ClpB family. ClpD subfamily. In terms of tissue distribution, highly expressed in stems, culms and leaves.

Its subcellular location is the plastid. It is found in the chloroplast. In terms of biological role, molecular chaperone that may interact with a ClpP-like protease involved in degradation of denatured proteins in the chloroplast. The sequence is that of Chaperone protein ClpD2, chloroplastic (CLPD2) from Oryza sativa subsp. japonica (Rice).